Here is a 395-residue protein sequence, read N- to C-terminus: ATP phosphoribosyltransferase regulatory subunit (395 aa).

It belongs to the class-II aminoacyl-tRNA synthetase family. HisZ subfamily. As to quaternary structure, heteromultimer composed of HisG and HisZ subunits.

It is found in the cytoplasm. It participates in amino-acid biosynthesis; L-histidine biosynthesis; L-histidine from 5-phospho-alpha-D-ribose 1-diphosphate: step 1/9. Functionally, required for the first step of histidine biosynthesis. May allow the feedback regulation of ATP phosphoribosyltransferase activity by histidine. The polypeptide is ATP phosphoribosyltransferase regulatory subunit (Pseudomonas syringae pv. syringae (strain B728a)).